The primary structure comprises 428 residues: FAD-dependent monooxygenase kojA (428 aa).

Residues 52-60 (RLHKGPHYP) and 328-329 (SV) each bind FAD.

This sequence belongs to the aromatic-ring hydroxylase family. FAD serves as cofactor.

Its function is as follows. Probable FAD-dependent monooxygenase; part of the gene cluster that mediates the biosynthesis of 5-hydroxy-2-hydroxymethyl-1,4-pyrone, also know as kojic acid, a by-product in the fermentation process of malting rice that acts as a chelation agent. Glucose might be converted to kojic acid by a combination of dehydrogenase and dehydratase reactions involving kojA and probably additional enzymes. This is FAD-dependent monooxygenase kojA from Aspergillus flavus (strain ATCC 200026 / FGSC A1120 / IAM 13836 / NRRL 3357 / JCM 12722 / SRRC 167).